We begin with the raw amino-acid sequence, 238 residues long: Putative type I specificity subunit S.MpnORF201P (238 aa).

This sequence belongs to the type-I restriction system S methylase family. The methyltransferase is composed of M and S polypeptides.

Functionally, the specificity (S) subunit of a type I methyltransferase (MTase); this subunit dictates DNA sequence specificity. The single R subunit has multiple frameshifts and is probably not expressed. This is Putative type I specificity subunit S.MpnORF201P from Mycoplasma pneumoniae (strain ATCC 29342 / M129 / Subtype 1) (Mycoplasmoides pneumoniae).